Consider the following 308-residue polypeptide: D-alanine--D-alanine ligase (308 aa).

The region spanning 105–302 (KAIFKALGLD…FPELCERILD (198 aa)) is the ATP-grasp domain. Residue 133-188 (DLPFGVPCVVKPAGEGSSVGVQIVKDAARLADACREAARYKGDVVVERYVKGTEVN) participates in ATP binding. Asp256, Glu269, and Asn271 together coordinate Mg(2+).

Belongs to the D-alanine--D-alanine ligase family. It depends on Mg(2+) as a cofactor. The cofactor is Mn(2+).

It localises to the cytoplasm. The enzyme catalyses 2 D-alanine + ATP = D-alanyl-D-alanine + ADP + phosphate + H(+). The protein operates within cell wall biogenesis; peptidoglycan biosynthesis. Functionally, cell wall formation. The sequence is that of D-alanine--D-alanine ligase from Anaeromyxobacter sp. (strain Fw109-5).